The primary structure comprises 82 residues: Small ribosomal subunit protein bS16 (82 aa).

Belongs to the bacterial ribosomal protein bS16 family.

The polypeptide is Small ribosomal subunit protein bS16 (Natranaerobius thermophilus (strain ATCC BAA-1301 / DSM 18059 / JW/NM-WN-LF)).